Here is a 512-residue protein sequence, read N- to C-terminus: Multidrug export protein EmrB (512 aa).

The Cytoplasmic portion of the chain corresponds to 1-12; it reads MQQQKPLEGAQL. The helical transmembrane segment at 13–38 threads the bilayer; it reads VIMTIALSLATFMQVLDSTIANVAIP. The Extracellular portion of the chain corresponds to 39 to 51; that stretch reads TIAGNLGSSLSQG. The helical transmembrane segment at 52-72 threads the bilayer; the sequence is TWVITSFGVANAISIPLTGWL. The Cytoplasmic segment spans residues 73 to 81; the sequence is AKRVGEVKL. A helical transmembrane segment spans residues 82-100; the sequence is FLWSTIAFAIASWACGVSS. Topologically, residues 101–109 are extracellular; sequence SLNMLIFFR. Residues 110 to 128 form a helical membrane-spanning segment; it reads VIQGIVAGPLIPLSQSLLL. Over 129-136 the chain is Cytoplasmic; sequence NNYPPAKR. A helical transmembrane segment spans residues 137–159; the sequence is SIALALWSMTVIVAPICGPILGG. At 160–164 the chain is on the extracellular side; it reads YISDN. The helical transmembrane segment at 165 to 189 threads the bilayer; that stretch reads YHWGWIFFINVPIGVAVVLMTLQTL. Over 190–202 the chain is Cytoplasmic; it reads RGRETRTERRRID. Residues 203–223 form a helical membrane-spanning segment; that stretch reads AVGLALLVIGIGSLQIMLDRG. Residues 224–233 are Extracellular-facing; that stretch reads KELDWFSSQE. The helical transmembrane segment at 234–249 threads the bilayer; it reads IIILTVVAVVAICFLI. Topologically, residues 250–271 are cytoplasmic; that stretch reads VWELTDDNPIVDLSLFKSRNFT. The helical transmembrane segment at 272–295 threads the bilayer; that stretch reads IGCLCISLAYMLYFGAIVLLPQLL. Topologically, residues 296-305 are extracellular; sequence QEVYGYTATW. Residues 306 to 329 form a helical membrane-spanning segment; sequence AGLASAPVGIIPVILSPIIGRFAH. Topologically, residues 330-335 are cytoplasmic; the sequence is KLDMRR. A helical transmembrane segment spans residues 336-355; the sequence is LVTFSFIMYAVCFYWRAYTF. Topologically, residues 356 to 363 are extracellular; sequence EPGMDFGA. A helical membrane pass occupies residues 364–387; it reads SAWPQFIQGFAVACFFMPLTTITL. Residues 388–407 are Cytoplasmic-facing; sequence SGLPPERLAAASSLSNFTRT. A helical membrane pass occupies residues 408 to 428; it reads LAGSIGTSITTTMWTNRESMH. Residues 429 to 481 lie on the Extracellular side of the membrane; sequence HAQLTESVNPFNPNAQAMYSQLEGLGMTQQQASGWIAQQITNQGLIISANEIF. A helical transmembrane segment spans residues 482–504; that stretch reads WMSAGIFLVLLGLVWFAKPPFGA. Over 505–512 the chain is Cytoplasmic; it reads GGGGGGAH.

Belongs to the major facilitator superfamily. EmrB family. Part of the tripartite efflux system EmrAB-TolC, which is composed of an inner membrane transporter, EmrB, a periplasmic membrane fusion protein, EmrA, and an outer membrane component, TolC. The complex forms a large protein conduit and can translocate molecules across both the inner and outer membranes. Interacts with EmrA.

The protein resides in the cell inner membrane. Its function is as follows. Part of the tripartite efflux system EmrAB-TolC, which confers resistance to antibiotics. The protein is Multidrug export protein EmrB (emrB) of Escherichia coli O157:H7.